The chain runs to 122 residues: Large ribosomal subunit protein uL14 (122 aa).

The protein belongs to the universal ribosomal protein uL14 family. Part of the 50S ribosomal subunit. Forms a cluster with proteins L3 and L19. In the 70S ribosome, L14 and L19 interact and together make contacts with the 16S rRNA in bridges B5 and B8.

Its function is as follows. Binds to 23S rRNA. Forms part of two intersubunit bridges in the 70S ribosome. In Sulfurovum sp. (strain NBC37-1), this protein is Large ribosomal subunit protein uL14.